The chain runs to 113 residues: Small ribosomal subunit protein mS41 (113 aa).

The N-terminal 22 residues, 1–22 (MLILKRIFIIRNFIFPFSNCRY), are a transit peptide targeting the mitochondrion.

It belongs to the mitochondrion-specific ribosomal protein mS41 family. In terms of assembly, component of the mitochondrial small ribosomal subunit (mt-SSU). Mature yeast 74S mitochondrial ribosomes consist of a small (37S) and a large (54S) subunit. The 37S small subunit contains a 15S ribosomal RNA (15S mt-rRNA) and at least 32 different proteins. The 54S large subunit contains a 21S rRNA (21S mt-rRNA) and at least 45 different proteins.

It is found in the mitochondrion. Component of the mitochondrial ribosome (mitoribosome), a dedicated translation machinery responsible for the synthesis of mitochondrial genome-encoded proteins, including at least some of the essential transmembrane subunits of the mitochondrial respiratory chain. The mitoribosomes are attached to the mitochondrial inner membrane and translation products are cotranslationally integrated into the membrane. mS41 is involved in telomere length regulation. In Schizosaccharomyces pombe (strain 972 / ATCC 24843) (Fission yeast), this protein is Small ribosomal subunit protein mS41 (fyv4).